A 251-amino-acid chain; its full sequence is Triosephosphate isomerase (251 aa).

9-11 provides a ligand contact to substrate; the sequence is NWK. The Electrophile role is filled by His-95. Glu-167 (proton acceptor) is an active-site residue. Residues Gly-173, Ser-213, and 234–235 contribute to the substrate site; that span reads GG. A Phosphoserine modification is found at Ser-213.

This sequence belongs to the triosephosphate isomerase family. As to quaternary structure, homodimer.

The protein resides in the cytoplasm. It carries out the reaction D-glyceraldehyde 3-phosphate = dihydroxyacetone phosphate. The protein operates within carbohydrate biosynthesis; gluconeogenesis. It functions in the pathway carbohydrate degradation; glycolysis; D-glyceraldehyde 3-phosphate from glycerone phosphate: step 1/1. Involved in the gluconeogenesis. Catalyzes stereospecifically the conversion of dihydroxyacetone phosphate (DHAP) to D-glyceraldehyde-3-phosphate (G3P). The protein is Triosephosphate isomerase of Shouchella clausii (strain KSM-K16) (Alkalihalobacillus clausii).